A 250-amino-acid polypeptide reads, in one-letter code: Aquaporin TIP2-1 (250 aa).

M1 carries the N-acetylmethionine modification. The Cytoplasmic segment spans residues 1–20 (MAGVAFGSFDDSFSLASLRA). The residue at position 2 (A2) is an N-acetylalanine; in Aquaporin TIP2-1, N-terminally processed. The helical transmembrane segment at 21 to 41 (YLAEFISTLLFVFAGVGSAIA) threads the bilayer. Topologically, residues 42–54 (YAKLTSDAALDTP) are vacuolar. A helical transmembrane segment spans residues 55-75 (GLVAIAVCHGFALFVAVAIGA). The Cytoplasmic segment spans residues 76–98 (NISGGHVNPAVTFGLAVGGQITV). The short motif at 83 to 85 (NPA) is the NPA 1 element. The chain crosses the membrane as a helical span at residues 99 to 119 (ITGVFYWIAQLLGSTAACFLL). The Vacuolar segment spans residues 120–141 (KYVTGGLAVPTHSVAAGLGSIE). A helical transmembrane segment spans residues 142-162 (GVVMEIIITFALVYTVYATAA). Residues 163–168 (DPKKGS) are Cytoplasmic-facing. A helical membrane pass occupies residues 169 to 189 (LGTIAPLAIGLIVGANILAAG). Residues 190–215 (PFSGGSMNPARSFGPAVAAGDFSGHW) are Vacuolar-facing. The NPA 2 motif lies at 197-199 (NPA). A helical transmembrane segment spans residues 216–236 (VYWVGPLIGGGLAGLIYGNVF). Topologically, residues 237–250 (MGSSEHVPLASADF) are cytoplasmic.

Belongs to the MIP/aquaporin (TC 1.A.8) family. TIP (TC 1.A.8.10) subfamily. As to quaternary structure, interacts with cucumber mosaic virus (CMV) Protein 1a. As to expression, strongly expressed in shoot, rosette, bolt and flowers. Also expressed in roots, flower buds and above ground.

The protein resides in the vacuole membrane. Its function is as follows. Aquaporin required to facilitate the transport of water from the vacuolar compartment to the cytoplasm. Does not promote glycerol permeability. Its function is impaired by Hg(2+). Transports urea in yeast cells and Xenopus laevis oocytes in a pH-independent manner. Transports methylammonium or ammonium in yeast cells and Xenopus laevis oocytes, preferentially at high medium pH. May participate in vacuolar compartmentation and detoxification of ammonium. In Arabidopsis thaliana (Mouse-ear cress), this protein is Aquaporin TIP2-1 (TIP2-1).